A 624-amino-acid chain; its full sequence is ABC transporter G family member 23 (624 aa).

Residues 52–296 (LTVTNLSYTI…IAKLGFQIPE (245 aa)) enclose the ABC transporter domain. An ATP-binding site is contributed by 84–91 (GPSGTGKS). The 211-residue stretch at 350-560 (TEISYLCSRF…PLESMVVNEY (211 aa)) folds into the ABC transmembrane type-2 domain. 6 helical membrane passes run 369 to 389 (LFLA…SVYT), 402 to 422 (LGLF…ALPI), 450 to 470 (IAFV…VYWI), 480 to 500 (FSFF…LVLF), 511 to 531 (GNSL…YFIP), and 595 to 615 (INVG…WGIL).

This sequence belongs to the ABC transporter superfamily. ABCG family. Eye pigment precursor importer (TC 3.A.1.204) subfamily.

Its subcellular location is the membrane. The protein is ABC transporter G family member 23 (ABCG23) of Arabidopsis thaliana (Mouse-ear cress).